A 394-amino-acid polypeptide reads, in one-letter code: Elongation factor Tu (394 aa).

The region spanning 10-204 is the tr-type G domain; it reads LPHVNIGTIG…AVDEYIPTPT (195 aa). The interval 19 to 26 is G1; the sequence is GHVDHGKT. Residue 19-26 coordinates GTP; that stretch reads GHVDHGKT. Thr-26 contacts Mg(2+). The interval 60 to 64 is G2; sequence GITIN. Residues 81-84 form a G3 region; the sequence is DCPG. Residues 81–85 and 136–139 each bind GTP; these read DCPGH and NKCD. The interval 136–139 is G4; sequence NKCD. Residues 174–176 are G5; sequence SAL.

The protein belongs to the TRAFAC class translation factor GTPase superfamily. Classic translation factor GTPase family. EF-Tu/EF-1A subfamily. As to quaternary structure, monomer.

The protein localises to the cytoplasm. It carries out the reaction GTP + H2O = GDP + phosphate + H(+). GTP hydrolase that promotes the GTP-dependent binding of aminoacyl-tRNA to the A-site of ribosomes during protein biosynthesis. The sequence is that of Elongation factor Tu from Mesoplasma florum (strain ATCC 33453 / NBRC 100688 / NCTC 11704 / L1) (Acholeplasma florum).